Here is a 183-residue protein sequence, read N- to C-terminus: Ferritin heavy chain (183 aa).

The residue at position 1 (M1) is an N-acetylmethionine. N-acetylthreonine; in Ferritin heavy chain, N-terminally processed is present on T2. The 150-residue stretch at 11 to 160 (QNYHQDSEAA…DHVTNLRKMG (150 aa)) folds into the Ferritin-like diiron domain. Residues E28, E63, H66, E108, and Q142 each contribute to the Fe cation site. 2 positions are modified to phosphoserine: S179 and S183.

Belongs to the ferritin family. As to quaternary structure, oligomer of 24 subunits. There are two types of subunits: L (light) chain and H (heavy) chain. The major chain can be light or heavy, depending on the species and tissue type. The functional molecule forms a roughly spherical shell with a diameter of 12 nm and contains a central cavity into which the insoluble mineral iron core is deposited. Interacts with NCOA4; NCOA4 promotes targeting of the iron-binding ferritin complex to autolysosomes following starvation or iron depletion.

It localises to the cytoplasm. It is found in the lysosome. Its subcellular location is the cytoplasmic vesicle. The protein localises to the autophagosome. The enzyme catalyses 4 Fe(2+) + O2 + 4 H(+) = 4 Fe(3+) + 2 H2O. Its function is as follows. Stores iron in a soluble, non-toxic, readily available form. Important for iron homeostasis. Has ferroxidase activity. Iron is taken up in the ferrous form and deposited as ferric hydroxides after oxidation. Also plays a role in delivery of iron to cells. Mediates iron uptake in capsule cells of the developing kidney. Delivery to lysosomes is mediated by the cargo receptor NCOA4 for autophagic degradation and release of iron. This chain is Ferritin heavy chain (FTH1), found in Pongo abelii (Sumatran orangutan).